The sequence spans 311 residues: Phosphopantothenate--cysteine ligase (311 aa).

At Ala-2 the chain carries N-acetylalanine.

This sequence belongs to the PPC synthetase family. Homodimer.

It catalyses the reaction (R)-4'-phosphopantothenate + L-cysteine + ATP = N-[(R)-4-phosphopantothenoyl]-L-cysteine + AMP + diphosphate + H(+). The catalysed reaction is (R)-4'-phosphopantothenate + L-cysteine + CTP = N-[(R)-4-phosphopantothenoyl]-L-cysteine + CMP + diphosphate + H(+). Its pathway is cofactor biosynthesis; coenzyme A biosynthesis; CoA from (R)-pantothenate: step 2/5. In terms of biological role, catalyzes the second step in the biosynthesis of coenzyme A from vitamin B5, where cysteine is conjugated to 4'-phosphopantothenate to form 4-phosphopantothenoylcysteine. Has a preference for ATP over CTP as a cosubstrate. The protein is Phosphopantothenate--cysteine ligase (Ppcs) of Mus musculus (Mouse).